A 355-amino-acid polypeptide reads, in one-letter code: CX3C chemokine receptor 1 (355 aa).

Over 1–31 the chain is Extracellular; the sequence is MDQFPESVTENFEYDDLAEACYIGDIVVFGT. A helical membrane pass occupies residues 32–59; it reads VFLSIFYSVIFAIGLVGNLLVVFALTNS. Residues 60–69 lie on the Cytoplasmic side of the membrane; the sequence is KKPKSVTDIY. The chain crosses the membrane as a helical span at residues 70–90; sequence LLNLALSDLLFVATLPFWTHY. The Extracellular portion of the chain corresponds to 91-103; sequence LINEKGLHNAMCK. Cysteines 102 and 175 form a disulfide. A helical transmembrane segment spans residues 104–125; sequence FTTAFFFIGFFGSIFFITVISI. At 126–142 the chain is on the cytoplasmic side; sequence DRYLAIVLAANSMNNRT. A helical membrane pass occupies residues 143–167; it reads VQHGVTISLGVWAAAILVAAPQFMF. Residues 168–195 lie on the Extracellular side of the membrane; that stretch reads TKQKENECLGDYPEVLQEIWPVLRNVET. Residues 196-215 traverse the membrane as a helical segment; the sequence is NFLGFLLPLLIMSYCYFRII. Residues 216–231 are Cytoplasmic-facing; sequence QTLFSCKNHKKAKAIK. A helical transmembrane segment spans residues 232-256; that stretch reads LILLVVIVFFLFWTPYNVMIFLETL. The Extracellular portion of the chain corresponds to 257–273; that stretch reads KLYDFFPSCDMRKDLRL. The chain crosses the membrane as a helical span at residues 274 to 297; sequence ALSVTETVAFSHCCLNPLIYAFAG. The Cytoplasmic portion of the chain corresponds to 298–355; the sequence is EKFRRYLYHLYGKCLAVLCGRSVHVDFSSSESQRSRHGSVLSSNFTYHTSDGDALLLL. Thr-346 bears the Phosphothreonine mark.

This sequence belongs to the G-protein coupled receptor 1 family. In terms of assembly, found in a ternary complex with CX3CL1 and ITGAV:ITGB3 or ITGA4:ITGB1. As to quaternary structure, (Microbial infection) Interacts with human respiratory syncytial virus (HRSV) protein G; this interaction modulates host immune response. (Microbial infection) Interacts with HIV-1 envelope polyprotein gp160. In terms of processing, this protein is not N-glycosylated which is unusual for G-protein-coupled receptors. Expressed in lymphoid and neural tissues. Expressed in lymphocyte subsets, such as natural killer (NK) cells, gamma-delta T-cells and terminally differentiated CD8(+) T-cells. Expressed in smooth muscle cells in atherosclerotic plaques.

It is found in the cell membrane. In terms of biological role, receptor for the C-X3-C chemokine fractalkine (CX3CL1) present on many early leukocyte cells; CX3CR1-CX3CL1 signaling exerts distinct functions in different tissue compartments, such as immune response, inflammation, cell adhesion and chemotaxis. CX3CR1-CX3CL1 signaling mediates cell migratory functions. Responsible for the recruitment of natural killer (NK) cells to inflamed tissues. Acts as a regulator of inflammation process leading to atherogenesis by mediating macrophage and monocyte recruitment to inflamed atherosclerotic plaques, promoting cell survival. Involved in airway inflammation by promoting interleukin 2-producing T helper (Th2) cell survival in inflamed lung. Involved in the migration of circulating monocytes to non-inflamed tissues, where they differentiate into macrophages and dendritic cells. Acts as a negative regulator of angiogenesis, probably by promoting macrophage chemotaxis. Plays a key role in brain microglia by regulating inflammatory response in the central nervous system (CNS) and regulating synapse maturation. Required to restrain the microglial inflammatory response in the CNS and the resulting parenchymal damage in response to pathological stimuli. Involved in brain development by participating in synaptic pruning, a natural process during which brain microglia eliminates extra synapses during postnatal development. Synaptic pruning by microglia is required to promote the maturation of circuit connectivity during brain development. Acts as an important regulator of the gut microbiota by controlling immunity to intestinal bacteria and fungi. Expressed in lamina propria dendritic cells in the small intestine, which form transepithelial dendrites capable of taking up bacteria in order to provide defense against pathogenic bacteria. Required to initiate innate and adaptive immune responses against dissemination of commensal fungi (mycobiota) component of the gut: expressed in mononuclear phagocytes (MNPs) and acts by promoting induction of antifungal IgG antibodies response to confer protection against disseminated C.albicans or C.auris infection. Also acts as a receptor for C-C motif chemokine CCL26, inducing cell chemotaxis. (Microbial infection) Acts as a coreceptor with CD4 for HIV-1 virus envelope protein. Its function is as follows. (Microbial infection) Acts as a coreceptor with CD4 for HIV-1 virus envelope protein. May have more potent HIV-1 coreceptothr activity than isoform 1. Functionally, (Microbial infection) Acts as a coreceptor with CD4 for HIV-1 virus envelope protein. May have more potent HIV-1 coreceptor activity than isoform 1. This chain is CX3C chemokine receptor 1, found in Homo sapiens (Human).